The chain runs to 583 residues: Protein LONG AFTER FAR-RED 3 (583 aa).

The helical transmembrane segment at Phe7 to Leu27 threads the bilayer. N-linked (GlcNAc...) asparagine glycans are attached at residues Asn55 and Asn374.

It belongs to the metallo-dependent hydrolases superfamily. Expressed at low level in seedlings, roots, leaves, stems, flowers, and siliques.

The protein resides in the membrane. It is found in the cytoplasm. The protein localises to the perinuclear region. Required for phyA-controlled responses to continuous far-red light (FRc) conditions, including the inhibition of hypocotyl elongation and the regulation of XTH15/XTR7 expression. In Arabidopsis thaliana (Mouse-ear cress), this protein is Protein LONG AFTER FAR-RED 3.